The following is a 2122-amino-acid chain: Unique GC organizer UGO (2122 aa).

The next 5 membrane-spanning stretches (helical) occupy residues 19 to 39 (FAVA…TNSL), 50 to 70 (LFGM…FVIV), 82 to 102 (TYIM…MQLI), 115 to 135 (VLTF…VLIG), and 145 to 165 (VVCS…DVGL). Disordered stretches follow at residues 337 to 403 (AALH…HRSA), 422 to 532 (FRGL…GPFV), 565 to 591 (DLRE…SGLQ), 627 to 762 (HRRG…GRAN), 785 to 815 (HAAS…CSAS), 848 to 870 (MSRR…RAER), 903 to 949 (SKEG…ASAN), 999 to 1046 (RNET…LHSR), 1068 to 1308 (PSDL…HEAV), 1328 to 1368 (AGLS…SEEE), 1515 to 1540 (ANSS…AASA), 1560 to 1608 (AAEH…TPHT), and 1639 to 1727 (QGLG…TFFG). The segment covering 363–374 (RSNTLRGCSGQV) has biased composition (polar residues). Basic and acidic residues-rich tracts occupy residues 503 to 525 (LRMD…DPAK), 565 to 585 (DLRE…HAAA), and 632 to 645 (GARD…RGEP). Residues 672–687 (RLSRSRRHKTRTYRRG) show a composition bias toward basic residues. Residues 690-699 (SDGTTAGTSD) are compositionally biased toward low complexity. The segment covering 707 to 720 (LEDEGSDSGQESES) has biased composition (acidic residues). Over residues 725 to 735 (RRRMRSSRNRR) the composition is skewed to basic residues. Over residues 741–750 (EDSSSGTSVR) the composition is skewed to low complexity. The segment covering 751 to 760 (SEGRHCREGR) has biased composition (basic and acidic residues). The N-linked (GlcNAc...) asparagine glycan is linked to asparagine 762. Positions 848–860 (MSRRRRREGKSRP) are enriched in basic residues. Composition is skewed to polar residues over residues 999–1011 (RNET…SPAT) and 1072–1097 (SLFT…SARI). Residue asparagine 1000 is glycosylated (N-linked (GlcNAc...) asparagine). The N-linked (GlcNAc...) asparagine glycan is linked to asparagine 1165. A compositionally biased stretch (basic and acidic residues) spans 1220–1261 (SREDLVGEADSHVSPEKEVFVSSRREKREEQVPRSRREERRD). Residues 1262–1276 (RRGRRWRRGRRRRKA) are compositionally biased toward basic residues. Basic and acidic residues-rich tracts occupy residues 1277–1289 (RECS…RDSS) and 1345–1359 (GDMR…HSDG). Over residues 1515–1527 (ANSSTAVSSSLPD) the composition is skewed to polar residues. An N-linked (GlcNAc...) asparagine glycan is attached at asparagine 1516. Low complexity-rich tracts occupy residues 1528 to 1540 (STAW…AASA) and 1597 to 1608 (TQTPQTPQTPHT). Positions 1684–1693 (LSATPSTRLQ) are enriched in polar residues. Helical transmembrane passes span 1859-1879 (VAWL…LLRL), 1956-1976 (MLAL…WHLI), 1989-2009 (IIPA…ILAV), 2017-2037 (IFLL…PPGV), and 2040-2060 (VQLF…GQLF). The disordered stretch occupies residues 2102–2122 (DEGSEDEVSMGSGHLVGDRSA).

Interacts with guanylate cyclase GC; the interaction regulates guanylate cyclase GC trafficking and catalytic activity.

It localises to the cell membrane. Functionally, in tachyzoites, required for the cellular trafficking of guanylate cyclase GC to the cell membrane and for GC guanylate cyclase activity. This is Unique GC organizer UGO from Toxoplasma gondii (strain ATCC 50853 / GT1).